The following is a 269-amino-acid chain: Integral membrane protein 2C (269 aa).

Thr39 carries the phosphothreonine modification. A helical; Signal-anchor for type II membrane protein membrane pass occupies residues 57–77 (VGGVCYLSMGMVVLLMGLVFA). The BRICHOS domain occupies 138–232 (FGGGDPADII…LCNGKDTYRL (95 aa)). Cys165 and Cys224 form a disulfide bridge. An N-linked (GlcNAc...) asparagine glycan is attached at Asn171.

It belongs to the ITM2 family. In terms of assembly, interacts with BACE1. Interacts with APP. Interacts with STMN2. Post-translationally, type I membrane-bound, as well as soluble, furin has a pre-eminent role in ITM2C proteolytic processing. PCSK7 and PCSK5 may also be involved although to a lesser extent. The soluble form of PCSK7 is incapable of processing ITM2C. Fails to undergo shedding by ADAM10 and intramembrane cleavage by SPPL2B.

The protein resides in the lysosome membrane. The protein localises to the cell membrane. Negative regulator of amyloid-beta peptide production. May inhibit the processing of APP by blocking its access to alpha- and beta-secretase. Binding to the beta-secretase-cleaved APP C-terminal fragment is negligible, suggesting that ITM2C is a poor gamma-secretase cleavage inhibitor. May play a role in TNF-induced cell death and neuronal differentiation. The polypeptide is Integral membrane protein 2C (ITM2C) (Sus scrofa (Pig)).